The sequence spans 560 residues: MSNKVKSDIEIASVAEILPVTTIAEHLGLDADALELYGKYKAKLSYDTIHSLKDKEQGKLVLVTAINPTPAGEGKSTVTVGLGDALSKKDKKTVIALREPSLGPTMGIKGGATGGGYAQVIPMEDINLHFTGDFHAITAANNALSAFIDNHMQQGNDLGIDGRRIVWKRVVDLNDRALRKVVVGLGGPIQGVPREDGFDITVASEIMAIICLASDLKDLKKRLSEIVIGYNYKKEPITVGEMGYEGALTLLLKDALKPNLVQTLEHTPAIVHGGPFANIAHGCNSVSATSTALKLGEYVVTEAGFGADLGAEKFLDIKVPALGKAPDCVVIVATIRALKMHGGALKTELSEENVDALAKGFTNLQKHTESIQTFGIPYVVAINKFITDSDAEVAKLEQLCEEHGIPFSLTEVWEKGGDGGLELADKVIAAVESGEEDYKRIYDDAWSIEEKLEAIVTKVYGGIGVELSSKAQKQIVEFKKYGWDRYPICMAKTQYSLSDDPTLLGRPTDFVIHIREFIPKLGAGFVVALTGDVMTMPGLPKKPAALNMDVDENGNAQGLF.

T69–S76 is an ATP binding site.

Belongs to the formate--tetrahydrofolate ligase family.

The catalysed reaction is (6S)-5,6,7,8-tetrahydrofolate + formate + ATP = (6R)-10-formyltetrahydrofolate + ADP + phosphate. It participates in one-carbon metabolism; tetrahydrofolate interconversion. The polypeptide is Formate--tetrahydrofolate ligase (Listeria innocua serovar 6a (strain ATCC BAA-680 / CLIP 11262)).